Reading from the N-terminus, the 191-residue chain is Large ribosomal subunit protein uL6 (191 aa).

Belongs to the universal ribosomal protein uL6 family. As to quaternary structure, part of the 50S ribosomal subunit.

Functionally, this protein binds to the 23S rRNA, and is important in its secondary structure. It is located near the subunit interface in the base of the L7/L12 stalk, and near the tRNA binding site of the peptidyltransferase center. This chain is Large ribosomal subunit protein uL6, found in Gloeobacter violaceus (strain ATCC 29082 / PCC 7421).